A 193-amino-acid chain; its full sequence is Peptidyl-tRNA hydrolase (193 aa).

Tyr-14 lines the tRNA pocket. The active-site Proton acceptor is His-19. Residues Phe-64, Asn-66, and Asn-112 each contribute to the tRNA site.

This sequence belongs to the PTH family. In terms of assembly, monomer.

It is found in the cytoplasm. It catalyses the reaction an N-acyl-L-alpha-aminoacyl-tRNA + H2O = an N-acyl-L-amino acid + a tRNA + H(+). Its function is as follows. Hydrolyzes ribosome-free peptidyl-tRNAs (with 1 or more amino acids incorporated), which drop off the ribosome during protein synthesis, or as a result of ribosome stalling. Functionally, catalyzes the release of premature peptidyl moieties from peptidyl-tRNA molecules trapped in stalled 50S ribosomal subunits, and thus maintains levels of free tRNAs and 50S ribosomes. This Bartonella bacilliformis (strain ATCC 35685 / KC583 / Herrer 020/F12,63) protein is Peptidyl-tRNA hydrolase.